A 380-amino-acid polypeptide reads, in one-letter code: Alcohol dehydrogenase 3 (380 aa).

Residues Cys48, Thr50, His70, Cys100, Cys103, Cys106, Cys114, and Cys178 each coordinate Zn(2+). 2 residues coordinate an alcohol: Thr50 and His70. Position 50 (Thr50) interacts with NAD(+). NAD(+)-binding positions include 203–208, Asp227, Arg232, Thr273, Val296, 296–298, Phe323, and Arg373; these read GLGAVG and VGV.

Belongs to the zinc-containing alcohol dehydrogenase family. In terms of assembly, homodimer. Homotetramer. The cofactor is Zn(2+).

It is found in the cytoplasm. It catalyses the reaction a primary alcohol + NAD(+) = an aldehyde + NADH + H(+). The enzyme catalyses a secondary alcohol + NAD(+) = a ketone + NADH + H(+). The polypeptide is Alcohol dehydrogenase 3 (ADH3) (Solanum tuberosum (Potato)).